A 255-amino-acid chain; its full sequence is MRHPLVMGNWKLNGSTHMVNELIAALRNELSSVDGCGVAIAPPVMYLDQAKHALAGSRIALGAQNVDVNLSGAFTGEVSADMLKDIGAQYIIIGHSERRTYHKETDAAIAEKFAVLKTAGLIPVLCIGETDAENEAGKTEEVCARQIDAVLKTQGAEAFKGAVIAYEPIWAIGTGKSATPAQAQAVHKFIRDHIAKQDAAVAAEVIIQYGGSVNDKNAAELFTQPDIDGALVGGASLKADAFAVIVKAAAAAKKA.

9-11 contacts substrate; that stretch reads NWK. The Electrophile role is filled by His95. Catalysis depends on Glu167, which acts as the Proton acceptor. Substrate contacts are provided by residues Gly173, Ser212, and 233–234; that span reads GG.

Belongs to the triosephosphate isomerase family. In terms of assembly, homodimer.

Its subcellular location is the cytoplasm. It catalyses the reaction D-glyceraldehyde 3-phosphate = dihydroxyacetone phosphate. Its pathway is carbohydrate biosynthesis; gluconeogenesis. It functions in the pathway carbohydrate degradation; glycolysis; D-glyceraldehyde 3-phosphate from glycerone phosphate: step 1/1. Functionally, involved in the gluconeogenesis. Catalyzes stereospecifically the conversion of dihydroxyacetone phosphate (DHAP) to D-glyceraldehyde-3-phosphate (G3P). In Serratia proteamaculans (strain 568), this protein is Triosephosphate isomerase.